The sequence spans 470 residues: ATP synthase subunit beta (470 aa).

Gly-157–Thr-164 provides a ligand contact to ATP.

Belongs to the ATPase alpha/beta chains family. As to quaternary structure, F-type ATPases have 2 components, CF(1) - the catalytic core - and CF(0) - the membrane proton channel. CF(1) has five subunits: alpha(3), beta(3), gamma(1), delta(1), epsilon(1). CF(0) has three main subunits: a(1), b(2) and c(9-12). The alpha and beta chains form an alternating ring which encloses part of the gamma chain. CF(1) is attached to CF(0) by a central stalk formed by the gamma and epsilon chains, while a peripheral stalk is formed by the delta and b chains.

The protein resides in the cell inner membrane. The catalysed reaction is ATP + H2O + 4 H(+)(in) = ADP + phosphate + 5 H(+)(out). Produces ATP from ADP in the presence of a proton gradient across the membrane. The catalytic sites are hosted primarily by the beta subunits. The protein is ATP synthase subunit beta of Geobacter sulfurreducens (strain ATCC 51573 / DSM 12127 / PCA).